The chain runs to 200 residues: 3-isopropylmalate dehydratase small subunit (200 aa).

It belongs to the LeuD family. LeuD type 1 subfamily. As to quaternary structure, heterodimer of LeuC and LeuD.

It catalyses the reaction (2R,3S)-3-isopropylmalate = (2S)-2-isopropylmalate. It participates in amino-acid biosynthesis; L-leucine biosynthesis; L-leucine from 3-methyl-2-oxobutanoate: step 2/4. Catalyzes the isomerization between 2-isopropylmalate and 3-isopropylmalate, via the formation of 2-isopropylmaleate. This Vibrio vulnificus (strain CMCP6) protein is 3-isopropylmalate dehydratase small subunit.